The following is a 284-amino-acid chain: Bifunctional protein FolD (284 aa).

Residues 165-167, serine 190, and valine 231 each bind NADP(+); that span reads GRS.

It belongs to the tetrahydrofolate dehydrogenase/cyclohydrolase family. As to quaternary structure, homodimer.

The catalysed reaction is (6R)-5,10-methylene-5,6,7,8-tetrahydrofolate + NADP(+) = (6R)-5,10-methenyltetrahydrofolate + NADPH. It carries out the reaction (6R)-5,10-methenyltetrahydrofolate + H2O = (6R)-10-formyltetrahydrofolate + H(+). It functions in the pathway one-carbon metabolism; tetrahydrofolate interconversion. Its function is as follows. Catalyzes the oxidation of 5,10-methylenetetrahydrofolate to 5,10-methenyltetrahydrofolate and then the hydrolysis of 5,10-methenyltetrahydrofolate to 10-formyltetrahydrofolate. The protein is Bifunctional protein FolD of Geobacillus kaustophilus (strain HTA426).